The sequence spans 1693 residues: Non-structural polyprotein pORF1 (1693 aa).

The Alphavirus-like MT domain maps to 56-240; the sequence is VFRPEVFWNQ…HDVSNLRSWI (185 aa). Positions 60–240 are methyltransferase; sequence EVFWNQPIQR…HDVSNLRSWI (181 aa). A Y-domain region spans residues 241–439; it reads RTTKVTGDHP…FYAQCRRWLS (199 aa). Cys-434 and Cys-481 are disulfide-bonded. Positions 442 to 509 are putative protease; that stretch reads FHLDPRVLVF…ESYEGSDVDP (68 aa). The interval 510 to 691 is zinc-binding; sequence AESAISDISG…FSPGHVWESA (182 aa). Zn(2+) is bound by residues His-671, Glu-673, and His-686. The tract at residues 712-778 is hinge; that stretch reads SSPTRPDLGF…AITHQTARHR (67 aa). The tract at residues 716 to 769 is disordered; sequence RPDLGFMSEPPIPSRAATPTLAAPLPPLAPDPSPPSSAPALDEPASAATSGVPA. Residues 739–752 are compositionally biased toward pro residues; that stretch reads PLPPLAPDPSPPSS. Residues 753–763 show a composition bias toward low complexity; the sequence is APALDEPASAA. The Macro domain occupies 775-921; it reads ARHRRLLFTY…LYLPELAARW (147 aa). The tract at residues 785–942 is X-domain; that stretch reads PDGSKVFAGS…TITEDAARTA (158 aa). In terms of domain architecture, (+)RNA virus helicase ATP-binding spans 934–1082; sequence ITEDAARTAN…RPDLAPTSWW (149 aa). Positions 960 to 1204 are NTPase/helicase; it reads GCRVTPGVVQ…ISDAIVNNFF (245 aa). 975-982 contributes to the ATP binding site; that stretch reads GVPGSGKS. Positions 1083 to 1216 constitute a (+)RNA virus helicase C-terminal domain; that stretch reads HVTHRCPADV…GGEIGHQRPS (134 aa). The interval 1207 to 1693 is RNA-directed RNA polymerase; that stretch reads GGEIGHQRPS…LTNSILCRVE (487 aa). The region spanning 1454-1565 is the RdRp catalytic domain; the sequence is SMVFENDFSE…LCSEYRQSPG (112 aa).

Belongs to the hepevirus non-structural polyprotein family. In terms of assembly, the protease domain interacts with host EIF2AK4 (via C-terminus); this interaction inhibits dimerization of EIF2AK4 and prevents EIF2AK4-mediated phosphorylation of host EIF2A. The cofactor is Mg(2+). ORF1 polyprotein does not seem to be processed into distinct enzymatic domains by a viral protease belonging to ORF1, but could be processed by a host serine protease like thrombin.

The protein localises to the host cytoplasm. Its subcellular location is the host perinuclear region. It carries out the reaction RNA(n) + a ribonucleoside 5'-triphosphate = RNA(n+1) + diphosphate. The catalysed reaction is GTP + S-adenosyl-L-methionine = N(7)-methyl-GTP + S-adenosyl-L-homocysteine. Its activity is regulated as follows. Putative protease: Inhibited by chymostatin. Methyltransferase: Displays a capping enzyme activity. This function is necessary since all viral RNAs are synthesized in the cytoplasm, and host capping enzymes are restricted to the nucleus. The enzymatic reaction involves a covalent link between 7-methyl-GMP and the methyltransferase, whereas eukaryotic capping enzymes form a covalent complex only with GMP. Methyltransferase catalyzes transfer of a methyl group from S-adenosylmethionine to GTP and GDP to yield m(7)GTP or m(7)GDP. GDP is a better substrate than GTP. This enzyme also displays guanylyltransferase activity to form a covalent complex, methyltransferase-m(7)GMP, from which 7-methyl-GMP is transferred to the mRNA to create the cap structure. In terms of biological role, Y-domain: Indispensable for virus replication. Functionally, putative protease: The putative protease domain although necessary for replication of the virus may not be a protease but rather a structural Zn(2+)-binding domain. Inhibits induction of IFN-beta by MDA5 and RIG-I pathways and down-regulates the expression of MDA5. Its function is as follows. NTPase/helicase: Multi-functional protein that exhibits NTPase and RNA unwinding activities. Hydrolyzes all NTPs efficiently and unwinds RNA duplexes containing 5' overhangs. Possesses a sequence independent RNA-5'-triphosphatase (RTPase) activity suggestive of its role in forming viral cap structure. Also participates in viral genome replication, RNA translocation and genome packaging/unpackaging. RNA-directed RNA polymerase: Plays an essential role in the virus replication. Binds to the 3'-end of the genomic RNA to initiate viral replication. The sequence is that of Non-structural polyprotein pORF1 from Bandicota bengalensis (lesser bandicoot rat).